Consider the following 497-residue polypeptide: Probable cytosol aminopeptidase (497 aa).

2 residues coordinate Mn(2+): Lys267 and Asp272. Lys279 is a catalytic residue. Positions 290, 349, and 351 each coordinate Mn(2+). The active site involves Arg353.

The protein belongs to the peptidase M17 family. The cofactor is Mn(2+).

It localises to the cytoplasm. The enzyme catalyses Release of an N-terminal amino acid, Xaa-|-Yaa-, in which Xaa is preferably Leu, but may be other amino acids including Pro although not Arg or Lys, and Yaa may be Pro. Amino acid amides and methyl esters are also readily hydrolyzed, but rates on arylamides are exceedingly low.. It carries out the reaction Release of an N-terminal amino acid, preferentially leucine, but not glutamic or aspartic acids.. Functionally, presumably involved in the processing and regular turnover of intracellular proteins. Catalyzes the removal of unsubstituted N-terminal amino acids from various peptides. The chain is Probable cytosol aminopeptidase from Pseudomonas putida (strain ATCC 47054 / DSM 6125 / CFBP 8728 / NCIMB 11950 / KT2440).